The following is a 323-amino-acid chain: Phosphomevalonate kinase (323 aa).

This sequence belongs to the GHMP kinase family. In terms of assembly, homodimer. The cofactor is Mg(2+).

It catalyses the reaction (R)-5-phosphomevalonate + ATP = (R)-5-diphosphomevalonate + ADP. It participates in isoprenoid biosynthesis; isopentenyl diphosphate biosynthesis via mevalonate pathway; isopentenyl diphosphate from (R)-mevalonate: step 2/3. Catalyzes the phosphorylation of (R)-mevalonate 5-phosphate (MVAP) to (R)-mevalonate 5-diphosphate (MVAPP). Functions in the mevalonate (MVA) pathway leading to isopentenyl diphosphate (IPP), a key precursor for the biosynthesis of isoprenoid compounds such as archaeal membrane lipids. This Saccharolobus solfataricus (strain ATCC 35092 / DSM 1617 / JCM 11322 / P2) (Sulfolobus solfataricus) protein is Phosphomevalonate kinase.